A 300-amino-acid polypeptide reads, in one-letter code: F-box/LRR-repeat protein 15 (300 aa).

M1 is modified (N-acetylmethionine). An F-box domain is found at 19–66; that stretch reads LLDLPWEDVLLPHVLNWVPLRQLLRLQRVSRAFRALVQLHLARLRRFD. Residues 113–269 are interaction with SMURF1; the sequence is NPQLRSVALA…EPSLSRLRKR (157 aa). LRR repeat units follow at residues 141 to 162, 167 to 188, 194 to 215, 220 to 241, and 246 to 267; these read RLQR…RGLA, ALEE…VYLA, GLRS…QELA, QLEH…RTLA, and ALRS…SRLR.

This sequence belongs to the FBXL15 family. In terms of assembly, part of the SCF (SKP1-CUL1-F-box) E3 ubiquitin-protein ligase complex SCF(FBXL15) composed of CUL1, SKP1, RBX1 and FBXL15.

It is found in the cytoplasm. Its pathway is protein modification; protein ubiquitination. Substrate recognition component of a SCF (SKP1-CUL1-F-box protein) E3 ubiquitin-protein ligase complex which mediates the ubiquitination and subsequent proteasomal degradation of SMURF1, thereby acting as a positive regulator of the BMP signaling pathway. Required for dorsal/ventral pattern formation. Also mediates ubiquitination of SMURF2 and WWP2. Required for bone mass maintenance. This is F-box/LRR-repeat protein 15 (Fbxl15) from Rattus norvegicus (Rat).